Consider the following 441-residue polypeptide: Importin subunit alpha-8 (441 aa).

8 ARM repeats span residues 39–79 (QRDI…NIAV), 80–118 (DNPG…NVAG), 121–158 (IHYR…NLCR), 160–199 (KPHP…HLSE), 202–241 (EDGI…AMTA), 244–284 (HQQT…NITA), 287–326 (KEQI…NMAL), and 330–370 (HDQI…NMLK).

This sequence belongs to the importin alpha family. As to quaternary structure, forms a complex with importin subunit beta-1.

The protein resides in the nucleus envelope. Binds to conventional NLS motifs and mediates nuclear protein import across the nuclear envelope. The chain is Importin subunit alpha-8 from Arabidopsis thaliana (Mouse-ear cress).